The primary structure comprises 320 residues: o-succinylbenzoate synthase (320 aa).

The active-site Proton donor is the lysine 133. Mg(2+) is bound by residues aspartate 161, glutamate 190, and aspartate 213. Lysine 235 serves as the catalytic Proton acceptor.

The protein belongs to the mandelate racemase/muconate lactonizing enzyme family. MenC type 1 subfamily. A divalent metal cation is required as a cofactor.

It carries out the reaction (1R,6R)-6-hydroxy-2-succinyl-cyclohexa-2,4-diene-1-carboxylate = 2-succinylbenzoate + H2O. The protein operates within quinol/quinone metabolism; 1,4-dihydroxy-2-naphthoate biosynthesis; 1,4-dihydroxy-2-naphthoate from chorismate: step 4/7. It participates in quinol/quinone metabolism; menaquinone biosynthesis. Converts 2-succinyl-6-hydroxy-2,4-cyclohexadiene-1-carboxylate (SHCHC) to 2-succinylbenzoate (OSB). The chain is o-succinylbenzoate synthase from Escherichia coli (strain K12 / MC4100 / BW2952).